An 84-amino-acid chain; its full sequence is RNA-binding protein Hfq (84 aa).

In terms of domain architecture, Sm spans 9–68 (DPYLNTLRKERVPVSIYLVNGIKLQGQIESFDQFVILLKNTVSQMVYKHAISTVVPGRPV).

This sequence belongs to the Hfq family. As to quaternary structure, homohexamer.

Its function is as follows. RNA chaperone that binds small regulatory RNA (sRNAs) and mRNAs to facilitate mRNA translational regulation in response to envelope stress, environmental stress and changes in metabolite concentrations. Also binds with high specificity to tRNAs. This is RNA-binding protein Hfq from Stutzerimonas stutzeri (strain A1501) (Pseudomonas stutzeri).